A 217-amino-acid chain; its full sequence is Holliday junction branch migration complex subunit RuvA (217 aa).

The interval 1–64 (MIGKLTGILD…EDAIRLFGFE (64 aa)) is domain I. Residues 65 to 145 (TKVEQDWFCL…NAPHQSMPHF (81 aa)) are domain II. Positions 146–160 (VSYSSETSSQAGTQH) are flexible linker. The interval 161 to 217 (TGHQHSMDALAALTKLGFERDQATHALQEAIKAFEGETPSSALLIRHSLKLLSSHLK) is domain III.

This sequence belongs to the RuvA family. As to quaternary structure, homotetramer. Forms an RuvA(8)-RuvB(12)-Holliday junction (HJ) complex. HJ DNA is sandwiched between 2 RuvA tetramers; dsDNA enters through RuvA and exits via RuvB. An RuvB hexamer assembles on each DNA strand where it exits the tetramer. Each RuvB hexamer is contacted by two RuvA subunits (via domain III) on 2 adjacent RuvB subunits; this complex drives branch migration. In the full resolvosome a probable DNA-RuvA(4)-RuvB(12)-RuvC(2) complex forms which resolves the HJ.

The protein localises to the cytoplasm. Functionally, the RuvA-RuvB-RuvC complex processes Holliday junction (HJ) DNA during genetic recombination and DNA repair, while the RuvA-RuvB complex plays an important role in the rescue of blocked DNA replication forks via replication fork reversal (RFR). RuvA specifically binds to HJ cruciform DNA, conferring on it an open structure. The RuvB hexamer acts as an ATP-dependent pump, pulling dsDNA into and through the RuvAB complex. HJ branch migration allows RuvC to scan DNA until it finds its consensus sequence, where it cleaves and resolves the cruciform DNA. This chain is Holliday junction branch migration complex subunit RuvA, found in Bartonella bacilliformis (strain ATCC 35685 / KC583 / Herrer 020/F12,63).